Consider the following 591-residue polypeptide: Beta-fructofuranosidase, insoluble isoenzyme CWINV4 (591 aa).

The signal sequence occupies residues 1-22 (MAISNVISVLLLLLVLINLSNQ). Residues 61–64 (WIND), Q80, W88, and 123–124 (WS) each bind substrate. Residue D64 is part of the active site. N-linked (GlcNAc...) asparagine glycans are attached at residues N145 and N182. Residues 187 to 188 (RD), E242, and D276 contribute to the substrate site. N336, N472, and N565 each carry an N-linked (GlcNAc...) asparagine glycan. Cysteines 436 and 484 form a disulfide.

This sequence belongs to the glycosyl hydrolase 32 family. Expressed in flowers, and seeds, and, to a lower extent, in seedlings.

It is found in the secreted. Its subcellular location is the extracellular space. The protein resides in the apoplast. The protein localises to the cell wall. The catalysed reaction is Hydrolysis of terminal non-reducing beta-D-fructofuranoside residues in beta-D-fructofuranosides.. The sequence is that of Beta-fructofuranosidase, insoluble isoenzyme CWINV4 (CWINV4) from Arabidopsis thaliana (Mouse-ear cress).